Consider the following 103-residue polypeptide: Co-chaperonin GroES (103 aa).

The protein belongs to the GroES chaperonin family. In terms of assembly, heptamer of 7 subunits arranged in a ring. Interacts with the chaperonin GroEL.

The protein resides in the cytoplasm. Its function is as follows. Together with the chaperonin GroEL, plays an essential role in assisting protein folding. The GroEL-GroES system forms a nano-cage that allows encapsulation of the non-native substrate proteins and provides a physical environment optimized to promote and accelerate protein folding. GroES binds to the apical surface of the GroEL ring, thereby capping the opening of the GroEL channel. This Nostoc punctiforme (strain ATCC 29133 / PCC 73102) protein is Co-chaperonin GroES.